A 199-amino-acid chain; its full sequence is Recombination protein RecR (199 aa).

The C4-type zinc-finger motif lies at 57-72 (CPICGNITEKEVCDIC). Residues 80-176 (TTIMVVEQPK…KVTRLAAGLS (97 aa)) form the Toprim domain.

The protein belongs to the RecR family.

Functionally, may play a role in DNA repair. It seems to be involved in an RecBC-independent recombinational process of DNA repair. It may act with RecF and RecO. The chain is Recombination protein RecR from Lactobacillus helveticus (strain DPC 4571).